Consider the following 367-residue polypeptide: Dye-decolorizing peroxidase (367 aa).

Aspartate 152 acts as the Proton acceptor in catalysis. Residue histidine 225 participates in heme binding. The tract at residues 311 to 367 (DPDGELAAAEPSDAQNDDPASASARIEETDPPNPASADDPAPADDSLGIGSLRRRDQ) is disordered. Over residues 345-356 (ASADDPAPADDS) the composition is skewed to low complexity. Residues 358–365 (GIGSLRRR) are targeting peptide.

It belongs to the DyP-type peroxidase family. As to quaternary structure, homohexamer. Heme b serves as cofactor.

It is found in the encapsulin nanocompartment. Cargo protein of a type 1 encapsulin nanocompartment. Has both general peroxidase activity and dye-decolorizing activity. Can catalyze the oxidation of both protoporphyrinogen IX and coproporphyrinogen III to their corresponding porphyrins. Also efficiently decolorizes the dyes alizarin red and Cibacron blue F3GA. This cargo-loaded encapsulin nanocompartment is probably involved in protection against oxidative damage. This Brevibacterium linens protein is Dye-decolorizing peroxidase.